Here is a 199-residue protein sequence, read N- to C-terminus: Phosphoserine phosphatase RsbX (199 aa).

The PPM-type phosphatase domain maps to Gln11–Leu198.

It catalyses the reaction O-phospho-L-serine + H2O = L-serine + phosphate. It carries out the reaction O-phospho-D-serine + H2O = D-serine + phosphate. Functionally, negative regulator of sigma-B activity. Dephosphorylates RsbS. Plays a role both in maintaining low sigma-B activity during growth and in reestablishing prestress sigma-B activity after induction. Could have a negative feedback role by indirectly communicating sigma-B protein levels. The protein is Phosphoserine phosphatase RsbX (rsbX) of Bacillus subtilis (strain 168).